The primary structure comprises 604 residues: Pescadillo homolog (604 aa).

The segment at 275-299 (NSEPAGLIEDKEGEDNKESSKTDES) is disordered. Residues 282–299 (IEDKEGEDNKESSKTDES) show a composition bias toward basic and acidic residues. The BRCT domain maps to 337–427 (ECRSLFKNLK…IILPTEGYIV (91 aa)). Disordered regions lie at residues 518-557 (KTFS…DAAD) and 574-604 (IEIN…AKGR). 2 stretches are compositionally biased toward basic and acidic residues: residues 531-557 (VVDK…DAAD) and 577-586 (NQERKKDKVN).

Belongs to the pescadillo family.

It localises to the nucleus. The protein localises to the nucleolus. Its subcellular location is the nucleoplasm. Its function is as follows. Required for maturation of ribosomal RNAs and formation of the large ribosomal subunit. In Oryza sativa subsp. japonica (Rice), this protein is Pescadillo homolog (PES).